The sequence spans 333 residues: uncharacterized protein (333 aa).

The signal sequence occupies residues 1-16 (MRPFLMILSVTYIASA). Asn-204 carries an N-linked (GlcNAc...) asparagine glycan.

This is an uncharacterized protein from Encephalitozoon cuniculi (strain GB-M1) (Microsporidian parasite).